The primary structure comprises 100 residues: uncharacterized protein (100 aa).

An HTH arsR-type domain is found at 8-100 (MKQSDDQIRA…TYLPGFLETL (93 aa)). The segment at residues 44-67 (CGEVGEKCNIVKTTASYHFKTLRE) is a DNA-binding region (H-T-H motif).

This is an uncharacterized protein from Bacillus subtilis (strain 168).